A 445-amino-acid chain; its full sequence is Phosphatidate cytidylyltransferase 2 (445 aa).

The segment covering 1 to 39 has biased composition (basic and acidic residues); it reads MTELRQRVAREPEAPPEDKESESEAKADGETASDSESRV. Residues 1 to 52 form a disordered region; sequence MTELRQRVAREPEAPPEDKESESEAKADGETASDSESRVEAVTQPPSADDTP. At Ser-21 the chain carries Phosphoserine. Thr-31 carries the phosphothreonine modification. Ser-33, Ser-35, and Ser-37 each carry phosphoserine. Position 51 is a phosphothreonine (Thr-51). 6 helical membrane-spanning segments follow: residues 79–99, 132–152, 166–186, 213–233, 262–282, and 340–360; these read MIAF…MIVM, FLLC…FFTL, HRFI…LSLV, LVIH…SCVI, GFIG…YVMS, and IALS…ASGF.

The protein belongs to the CDS family. Homodimer.

Its subcellular location is the endoplasmic reticulum membrane. The catalysed reaction is a 1,2-diacyl-sn-glycero-3-phosphate + CTP + H(+) = a CDP-1,2-diacyl-sn-glycerol + diphosphate. It carries out the reaction 1-octadecanoyl-2-(5Z,8Z,11Z,14Z-eicosatetraenoyl)-sn-glycero-3-phosphate + CTP + H(+) = 1-octadecanoyl-2-(5Z,8Z,11Z,14Z-eicosatetraenoyl)-sn-glycero-3-cytidine-5'-diphosphate + diphosphate. The enzyme catalyses 1-octadecanoyl-2-(9Z,12Z-octadecadienoyl)-sn-glycero-3-phosphate + CTP + H(+) = 1-octadecanoyl-2-(9Z,12Z-octadecadienoyl)-sn-glycero-3-cytidine-5'-diphosphate + diphosphate. It catalyses the reaction 1-hexadecanoyl-2-(5Z,8Z,11Z,14Z-eicosatetraenoyl)-sn-glycero-3-phosphate + CTP + H(+) = 1-hexadecanoyl-2-(5Z,8Z,11Z,14Z-eicosatetraenoyl)-sn-glycero-3-cytidine-5'-diphosphate + diphosphate. The catalysed reaction is 1,2-di-(5Z,8Z,11Z,14Z)-eicosatetraenoyl-sn-glycero-3-phosphate + CTP + H(+) = 1,2-di-(5Z,8Z,11Z,14Z-eicosatetraenoyl)-sn-glycero-3-cytidine-5'-diphosphate + diphosphate. It carries out the reaction 1-octadecanoyl-2-(9Z-octadecenoyl)-sn-glycero-3-phosphate + CTP + H(+) = 1-octadecanoyl-2-(9Z-octadecenoyl)-sn-glycero-3-cytidine-5'-diphosphate + diphosphate. The enzyme catalyses 1-octadecanoyl-2-(4Z,7Z,10Z,13Z,16Z,19Z-docosahexaenoyl)-sn-glycero-3-phosphate + CTP + H(+) = 1-octadecanoyl-2-(4Z,7Z,10Z,13Z,16Z,19Z-docosahexaenoyl)-sn-glycero-3-cytidine-5'-diphosphate + diphosphate. It catalyses the reaction 1,2-di-(9Z,12Z-octadecadienoyl)-sn-glycero-3-phosphate + CTP + H(+) = 1,2-di-(9Z,12Z-octadecadienoyl)-sn-glycero-3-cytidine-5'-diphosphate + diphosphate. The catalysed reaction is 1,2-di-(9Z-octadecenoyl)-sn-glycero-3-phosphate + CTP + H(+) = 1,2-di-(9Z-octadecenoyl)-sn-glycero-3-cytidine-5'-diphosphate + diphosphate. It functions in the pathway phospholipid metabolism; CDP-diacylglycerol biosynthesis; CDP-diacylglycerol from sn-glycerol 3-phosphate: step 3/3. In terms of biological role, catalyzes the conversion of phosphatidic acid (PA) to CDP-diacylglycerol (CDP-DAG), an essential intermediate in the synthesis of phosphatidylglycerol, cardiolipin and phosphatidylinositol. Exhibits specificity for the nature of the acyl chains at the sn-1 and sn-2 positions in the substrate, PA and the preferred acyl chain composition is 1-stearoyl-2-arachidonoyl-sn-phosphatidic acid. Plays an important role in regulating the growth and maturation of lipid droplets which are storage organelles at the center of lipid and energy homeostasis. The polypeptide is Phosphatidate cytidylyltransferase 2 (CDS2) (Bos taurus (Bovine)).